Reading from the N-terminus, the 585-residue chain is Bifunctional lycopene cyclase/phytoene synthase (585 aa).

Residues 1-243 are lycopene beta-cyclase; it reads MGFDYAIVHV…IVFGQLAFDN (243 aa). The next 7 helical transmembrane spans lie at 3–23, 35–55, 75–97, 123–141, 151–171, 173–193, and 221–241; these read FDYA…LTLL, KVLF…SYLI, IPLE…YLIL, LAGQ…LRVH, LIVV…YQFI, GLPW…LWLV, and IEEA…QLAF. The interval 250-585 is phytoene synthase; sequence TFPALFPKPP…AWRTLNKSIA (336 aa).

In the N-terminal section; belongs to the lycopene beta-cyclase family. The protein in the C-terminal section; belongs to the phytoene/squalene synthase family.

It localises to the membrane. It carries out the reaction all-trans-lycopene = gamma-carotene. It catalyses the reaction gamma-carotene = all-trans-beta-carotene. The catalysed reaction is 2 (2E,6E,10E)-geranylgeranyl diphosphate = 15-cis-phytoene + 2 diphosphate. The protein operates within carotenoid biosynthesis; beta-carotene biosynthesis. It functions in the pathway carotenoid biosynthesis; phytoene biosynthesis; all-trans-phytoene from geranylgeranyl diphosphate: step 1/1. Its function is as follows. Bifunctional enzyme that catalyzes the reactions from geranylgeranyl diphosphate to phytoene (phytoene synthase) and lycopene to beta-carotene via the intermediate gamma-carotene (lycopene cyclase). The protein is Bifunctional lycopene cyclase/phytoene synthase of Phaeosphaeria nodorum (strain SN15 / ATCC MYA-4574 / FGSC 10173) (Glume blotch fungus).